A 95-amino-acid chain; its full sequence is MNVYEIIRRPVVTEKSTIQKEENNQLTFEVDKKANKVEIARAIERIFKVKVLDVRTSTVNGKFKRRGKVLGKRRDWKKAMVTLAPGARIDFFDGV.

Belongs to the universal ribosomal protein uL23 family. Part of the 50S ribosomal subunit. Contacts protein L29, and trigger factor when it is bound to the ribosome.

In terms of biological role, one of the early assembly proteins it binds 23S rRNA. One of the proteins that surrounds the polypeptide exit tunnel on the outside of the ribosome. Forms the main docking site for trigger factor binding to the ribosome. The sequence is that of Large ribosomal subunit protein uL23 from Desulfatibacillum aliphaticivorans.